The sequence spans 114 residues: Histone H2B (114 aa).

A disordered region spans residues methionine 1–lysine 22. At lysine 3 the chain carries N6-acetyllysine. Lysine 110 participates in a covalent cross-link: Glycyl lysine isopeptide (Lys-Gly) (interchain with G-Cter in ubiquitin).

It belongs to the histone H2B family. The nucleosome is a histone octamer containing two molecules each of H2A, H2B, H3 and H4 assembled in one H3-H4 heterotetramer and two H2A-H2B heterodimers. The octamer wraps approximately 147 bp of DNA. In terms of processing, monoubiquitination of Lys-110 gives a specific tag for epigenetic transcriptional activation and is also prerequisite for histone H3 'Lys-4' and 'Lys-79' methylation.

It is found in the nucleus. The protein localises to the chromosome. Functionally, core component of nucleosome. Nucleosomes wrap and compact DNA into chromatin, limiting DNA accessibility to the cellular machineries which require DNA as a template. Histones thereby play a central role in transcription regulation, DNA repair, DNA replication and chromosomal stability. DNA accessibility is regulated via a complex set of post-translational modifications of histones, also called histone code, and nucleosome remodeling. The chain is Histone H2B from Olisthodiscus luteus (Marine phytoflagellate).